We begin with the raw amino-acid sequence, 106 residues long: ATP-dependent Clp protease adapter protein ClpS (106 aa).

This sequence belongs to the ClpS family. As to quaternary structure, binds to the N-terminal domain of the chaperone ClpA.

Involved in the modulation of the specificity of the ClpAP-mediated ATP-dependent protein degradation. In Photobacterium profundum (strain SS9), this protein is ATP-dependent Clp protease adapter protein ClpS.